A 274-amino-acid chain; its full sequence is UPF0173 metal-dependent hydrolase AnaeK_1127 (274 aa).

Belongs to the UPF0173 family.

This Anaeromyxobacter sp. (strain K) protein is UPF0173 metal-dependent hydrolase AnaeK_1127.